A 132-amino-acid chain; its full sequence is MTRIRRGYIARRRRTKIRLFASSFRGAHSRLTRTITQQKIKALVSAHRDRDSKKRNFRRLWIIRINAIIRERVVEWALSYSYSRLIHDLYKRQLLLNRKILAQIAISNRNCLYMISNELYKYKEVEESSGII.

The protein belongs to the bacterial ribosomal protein bL20 family.

The protein localises to the plastid. The protein resides in the chloroplast. In terms of biological role, binds directly to 23S ribosomal RNA and is necessary for the in vitro assembly process of the 50S ribosomal subunit. It is not involved in the protein synthesizing functions of that subunit. The protein is Large ribosomal subunit protein bL20c of Coffea arabica (Arabian coffee).